Consider the following 104-residue polypeptide: U20-lycotoxin-Ls1c (104 aa).

Residues M1–A30 form the signal peptide. Residues G31–S76 enclose the WAP domain. 5 disulfide bridges follow: C34–C64, C42–C68, C51–C63, C52–C90, and C57–C72.

The protein belongs to the venom protein 11 family. 02 (wap-2) subfamily. Post-translationally, contains 5 disulfide bonds. Expressed by the venom gland.

Its subcellular location is the secreted. Its function is as follows. Has antibacterial activity. This Lycosa singoriensis (Wolf spider) protein is U20-lycotoxin-Ls1c.